The chain runs to 845 residues: Receptor-like protein Cf-9 homolog (845 aa).

The first 19 residues, 1–19 (MGCVKLVFFMLLKLDLLEF), serve as a signal peptide directing secretion. The interval 20–70 (KNMFTVNPNASDYCYDYTDQRMQSYPRTLFWNKSTDCCSWDGIHCDETTGQ) is N-cap. Topologically, residues 20-794 (KNMFTVNPNA…EEDSPMISWQ (775 aa)) are extracellular. Residues Asn28, Asn51, and Asn88 are each glycosylated (N-linked (GlcNAc...) asparagine). An LRR 1; degenerate repeat occupies 71-94 (VVELDLRCSQLQGKFHSNSSLFQL). 25 LRR repeats span residues 95 to 118 (SNLK…KFGE), 119 to 143 (FSDL…ISHL), 144 to 171 (SKLH…LKNL), 172 to 193 (TQLR…SNFS), 194 to 217 (SHLT…VFHL), 219 to 242 (DLEF…KWNS), 244 to 266 (ASLM…SFSH), 267 to 291 (LTSL…LWNL), 292 to 316 (TNIE…RFEK), 318 to 338 (KRLS…SFNR), 340 to 364 (WTQL…VSGL), 365 to 388 (QNLG…IFSL), 390 to 410 (SLVV…EFKS), 411 to 434 (KTLS…LLNQ), 436 to 458 (SLQF…ICNL), 459 to 482 (KTLM…VGER), 484 to 506 (EYLL…TFSI), 507 to 531 (GNSF…LINC), 532 to 554 (KYLK…WLGY), 555 to 579 (LSQL…GSTN), 581 to 605 (FMRL…ILGN), 649 to 672 (LDSN…IIGD), 673 to 696 (LVGL…SFQN), 698 to 721 (SVLE…LASL), and 723 to 741 (FLEV…IPKG). N-linked (GlcNAc...) asparagine glycosylation is found at Asn131, Asn170, Asn183, and Asn191. Asn241 carries N-linked (GlcNAc...) asparagine glycosylation. N-linked (GlcNAc...) asparagine glycosylation is found at Asn279 and Asn290. 4 N-linked (GlcNAc...) asparagine glycosylation sites follow: Asn337, Asn360, Asn378, and Asn398. Asn446 carries an N-linked (GlcNAc...) asparagine glycan. N-linked (GlcNAc...) asparagine glycosylation occurs at Asn501. Residue Asn545 is glycosylated (N-linked (GlcNAc...) asparagine). N-linked (GlcNAc...) asparagine glycosylation is found at Asn656, Asn680, and Asn696. N-linked (GlcNAc...) asparagine glycans are attached at residues Asn728 and Asn749. Positions 742-794 (KQFDSFGNTSYQGNDGLRGFPLSKLCGVDDQVTTPAELDQEEEEEDSPMISWQ) are C-cap/acidic domain. The chain crosses the membrane as a helical span at residues 795–815 (GVLVGYGCGLVIGLSVIYIMW). Over 816–845 (STQYPAWFSRMDLKLEHIITTRMKKHKKRY) the chain is Cytoplasmic.

The protein belongs to the RLP family.

It is found in the cell membrane. At the opposite of its homolog Cf-9 found in S.pimpinellifolium, was not able to confer resistance to the fungal pathogen C.fulvum. The sequence is that of Receptor-like protein Cf-9 homolog from Solanum lycopersicum (Tomato).